The chain runs to 347 residues: tRNA N6-adenosine threonylcarbamoyltransferase (347 aa).

2 residues coordinate Fe cation: histidine 115 and histidine 119. Substrate-binding positions include 137-141 (LASGG), aspartate 170, glycine 183, and asparagine 281. Aspartate 309 serves as a coordination point for Fe cation.

It belongs to the KAE1 / TsaD family. The cofactor is Fe(2+).

Its subcellular location is the cytoplasm. The enzyme catalyses L-threonylcarbamoyladenylate + adenosine(37) in tRNA = N(6)-L-threonylcarbamoyladenosine(37) in tRNA + AMP + H(+). Functionally, required for the formation of a threonylcarbamoyl group on adenosine at position 37 (t(6)A37) in tRNAs that read codons beginning with adenine. Is involved in the transfer of the threonylcarbamoyl moiety of threonylcarbamoyl-AMP (TC-AMP) to the N6 group of A37, together with TsaE and TsaB. TsaD likely plays a direct catalytic role in this reaction. The sequence is that of tRNA N6-adenosine threonylcarbamoyltransferase from Methylorubrum extorquens (strain CM4 / NCIMB 13688) (Methylobacterium extorquens).